Reading from the N-terminus, the 207-residue chain is MKSNLHGLYLVTPDWDDTRKLLEITELALKGGVSLLQYRHKTADAALRQEQAECLQALCRSYEVPFIINDHIDLCLGINADGIHVGGTDKSVAEVRAIIGPDKILGSSCYGDLALAHAAEAAGASYVAFGGFYPSKVKKYPVTTAPTIVSDWKAQGKVPSCVIGGMTRDNSAPLVANGADMVAAISSVYLAGDPQAAARAFVSLFAK.

Residues 37–41 (QYRHK) and Asn69 contribute to the 4-amino-2-methyl-5-(diphosphooxymethyl)pyrimidine site. Positions 70 and 89 each coordinate Mg(2+). 4-amino-2-methyl-5-(diphosphooxymethyl)pyrimidine-binding residues include Ser108 and Lys138. Residues Gly165 and 185-186 (IS) each bind 2-[(2R,5Z)-2-carboxy-4-methylthiazol-5(2H)-ylidene]ethyl phosphate.

It belongs to the thiamine-phosphate synthase family. Requires Mg(2+) as cofactor.

It carries out the reaction 2-[(2R,5Z)-2-carboxy-4-methylthiazol-5(2H)-ylidene]ethyl phosphate + 4-amino-2-methyl-5-(diphosphooxymethyl)pyrimidine + 2 H(+) = thiamine phosphate + CO2 + diphosphate. The enzyme catalyses 2-(2-carboxy-4-methylthiazol-5-yl)ethyl phosphate + 4-amino-2-methyl-5-(diphosphooxymethyl)pyrimidine + 2 H(+) = thiamine phosphate + CO2 + diphosphate. The catalysed reaction is 4-methyl-5-(2-phosphooxyethyl)-thiazole + 4-amino-2-methyl-5-(diphosphooxymethyl)pyrimidine + H(+) = thiamine phosphate + diphosphate. Its pathway is cofactor biosynthesis; thiamine diphosphate biosynthesis; thiamine phosphate from 4-amino-2-methyl-5-diphosphomethylpyrimidine and 4-methyl-5-(2-phosphoethyl)-thiazole: step 1/1. Functionally, condenses 4-methyl-5-(beta-hydroxyethyl)thiazole monophosphate (THZ-P) and 2-methyl-4-amino-5-hydroxymethyl pyrimidine pyrophosphate (HMP-PP) to form thiamine monophosphate (TMP). In Janthinobacterium sp. (strain Marseille) (Minibacterium massiliensis), this protein is Thiamine-phosphate synthase.